The primary structure comprises 20 residues: Venom peptide Ocy8 (20 aa).

Expressed by the venom gland.

It is found in the secreted. This Opisthacanthus cayaporum (South American scorpion) protein is Venom peptide Ocy8.